A 465-amino-acid chain; its full sequence is Iron-sulfur cluster assembly SufBD family protein SH2035 (465 aa).

Belongs to the iron-sulfur cluster assembly SufBD family.

The protein is Iron-sulfur cluster assembly SufBD family protein SH2035 of Staphylococcus haemolyticus (strain JCSC1435).